Consider the following 156-residue polypeptide: 6,7-dimethyl-8-ribityllumazine synthase (156 aa).

Residues Phe-22, Ala-57–Glu-59, and Thr-81–Ile-83 contribute to the 5-amino-6-(D-ribitylamino)uracil site. Position 86 to 87 (Gly-86 to Thr-87) interacts with (2S)-2-hydroxy-3-oxobutyl phosphate. The Proton donor role is filled by His-89. Phe-114 is a binding site for 5-amino-6-(D-ribitylamino)uracil. Arg-128 is a (2S)-2-hydroxy-3-oxobutyl phosphate binding site.

The protein belongs to the DMRL synthase family. Forms an icosahedral capsid composed of 60 subunits, arranged as a dodecamer of pentamers.

The enzyme catalyses (2S)-2-hydroxy-3-oxobutyl phosphate + 5-amino-6-(D-ribitylamino)uracil = 6,7-dimethyl-8-(1-D-ribityl)lumazine + phosphate + 2 H2O + H(+). The protein operates within cofactor biosynthesis; riboflavin biosynthesis; riboflavin from 2-hydroxy-3-oxobutyl phosphate and 5-amino-6-(D-ribitylamino)uracil: step 1/2. Functionally, catalyzes the formation of 6,7-dimethyl-8-ribityllumazine by condensation of 5-amino-6-(D-ribitylamino)uracil with 3,4-dihydroxy-2-butanone 4-phosphate. This is the penultimate step in the biosynthesis of riboflavin. The sequence is that of 6,7-dimethyl-8-ribityllumazine synthase from Enterobacter sp. (strain 638).